The chain runs to 177 residues: Bifunctional protein PyrR (177 aa).

The PRPP-binding signature appears at 99-111; it reads VVLVDDVLFTGRT.

Belongs to the purine/pyrimidine phosphoribosyltransferase family. PyrR subfamily.

The catalysed reaction is UMP + diphosphate = 5-phospho-alpha-D-ribose 1-diphosphate + uracil. Functionally, regulates the transcription of the pyrimidine nucleotide (pyr) operon in response to exogenous pyrimidines. Also displays a weak uracil phosphoribosyltransferase activity which is not physiologically significant. In Citrifermentans bemidjiense (strain ATCC BAA-1014 / DSM 16622 / JCM 12645 / Bem) (Geobacter bemidjiensis), this protein is Bifunctional protein PyrR.